Here is a 257-residue protein sequence, read N- to C-terminus: uncharacterized protein (257 aa).

Ser127 is subject to Phosphoserine. Disordered stretches follow at residues 146-174 (HEDPKPSSTYNSSISAPPEDFKQDGEDDG) and 210-231 (AREKATELKQRRQEQATNRREK). Over residues 151–160 (PSSTYNSSIS) the composition is skewed to polar residues. Residues 196 to 257 (HVRMVREVHE…QQQQEDEQKT (62 aa)) adopt a coiled-coil conformation.

This is an uncharacterized protein from Arabidopsis thaliana (Mouse-ear cress).